A 99-amino-acid chain; its full sequence is UPF0045 protein MTH_1187 (99 aa).

This sequence belongs to the UPF0045 family. As to quaternary structure, homotetramer.

This chain is UPF0045 protein MTH_1187, found in Methanothermobacter thermautotrophicus (strain ATCC 29096 / DSM 1053 / JCM 10044 / NBRC 100330 / Delta H) (Methanobacterium thermoautotrophicum).